Consider the following 91-residue polypeptide: C-C motif chemokine 5 (91 aa).

The N-terminal stretch at 1–23 is a signal peptide; that stretch reads MKVSAAALCVILTTAALCVPASA. Intrachain disulfides connect cysteine 33/cysteine 57 and cysteine 34/cysteine 73.

The protein belongs to the intercrine beta (chemokine CC) family.

The protein resides in the secreted. Chemoattractant for blood monocytes, memory T-helper cells and eosinophils. Causes the release of histamine from basophils and activates eosinophils. May activate several chemokine receptors including CCR1, CCR3, CCR4 and CCR5. May also be an agonist of the G protein-coupled receptor GPR75. Together with GPR75, may play a role in neuron survival through activation of a downstream signaling pathway involving the PI3, Akt and MAP kinases. By activating GPR75 may also play a role in insulin secretion by islet cells. This is C-C motif chemokine 5 (CCL5) from Cavia porcellus (Guinea pig).